Reading from the N-terminus, the 151-residue chain is Caveolin-3 (151 aa).

The Cytoplasmic portion of the chain corresponds to 1–83; the sequence is MMTEEHTDLE…RLLSTLLGVP (83 aa). Residue lysine 38 forms a Glycyl lysine isopeptide (Lys-Gly) (interchain with G-Cter in SUMO3) linkage. An intramembrane region (helical) is located at residues 84-104; it reads LALLWGFLFACISFCHIWAVV. The Cytoplasmic segment spans residues 105 to 151; the sequence is PCIKSYLIEIQCISHIYSLCIRTFCNPLFAALGQVCSNIKVVLRREG.

The protein belongs to the caveolin family. In terms of assembly, homooligomer. Interacts with DYSF. Interacts with DLG1 and KCNA5; forms a ternary complex. Interacts with DAG1 (via its C-terminal); the interaction prevents binding of DAG1 with DMD. Interacts with TRIM72. Interacts with MUSK; may regulate MUSK signaling. Interacts with POPDC1. Interacts with CAVIN1, CAVIN2 and CAVIN4. Post-translationally, sumoylation with SUMO3 by PIAS4 may reduce agonist-induced internalization and desensitization of adrenergic receptor ABRD2. As to expression, expressed predominantly in muscle.

Its subcellular location is the golgi apparatus membrane. The protein resides in the cell membrane. It is found in the membrane. It localises to the caveola. The protein localises to the sarcolemma. May act as a scaffolding protein within caveolar membranes. Interacts directly with G-protein alpha subunits and can functionally regulate their activity. May also regulate voltage-gated potassium channels. Plays a role in the sarcolemma repair mechanism of both skeletal muscle and cardiomyocytes that permits rapid resealing of membranes disrupted by mechanical stress. Mediates the recruitment of CAVIN2 and CAVIN3 proteins to the caveolae. This chain is Caveolin-3 (Cav3), found in Rattus norvegicus (Rat).